Here is a 444-residue protein sequence, read N- to C-terminus: N-succinylarginine dihydrolase (444 aa).

Residues 19–28 (SGLSFGNVAS), Asn-110, and 137–138 (HR) each bind substrate. The active site involves Glu-174. Substrate is bound at residue Arg-214. His-250 is a catalytic residue. Asp-252 and Asn-362 together coordinate substrate. Cys-368 functions as the Nucleophile in the catalytic mechanism.

Belongs to the succinylarginine dihydrolase family. In terms of assembly, homodimer.

The enzyme catalyses N(2)-succinyl-L-arginine + 2 H2O + 2 H(+) = N(2)-succinyl-L-ornithine + 2 NH4(+) + CO2. Its pathway is amino-acid degradation; L-arginine degradation via AST pathway; L-glutamate and succinate from L-arginine: step 2/5. Its function is as follows. Catalyzes the hydrolysis of N(2)-succinylarginine into N(2)-succinylornithine, ammonia and CO(2). The protein is N-succinylarginine dihydrolase of Photobacterium profundum (strain SS9).